The chain runs to 347 residues: QKQVTRGFTGGVQTVTLIPGDGIGPEISAAVMKIFDAAKAPIQWEERNVTAIQGPGGKWMIPSEAKESMDKNKMGLKGPLKTPIAAGHPSMNLLLRKTFDLYANVRPCVSIEGYKTPYTDVNIVTIRENTEGEYSGIEHVIVDGVVQSIKLITEGGSKRIAEFAFEYARNNHRSNVTAVHKANIMRMSDGLFLQKCREVAENCKDIKFNEMYLDTVCLNMVQDPSQFDVLVMPNLYGDILSDLCAGLIGGLGVTPSGNIGANGVAIFESVHGTAPDIAGKDMANPTALLLSAVMMLRHMGLFDHAARIEAACFATIKDGKSLTKDLGGNAKCSDFTEEICRRVKDLD.

Residues Q1–F8 constitute a mitochondrion transit peptide. T14–I42 contacts NAD(+). Residue K58 is modified to N6-succinyllysine. T82 carries the phosphothreonine modification. Substrate is bound by residues R96, R106, and R127. An N6-acetyllysine modification is found at K204. 3 residues coordinate Mg(2+): D214, D238, and D242. The residue at position 324 (K324) is an N6-acetyllysine; alternate. K324 is modified (N6-succinyllysine; alternate). At K331 the chain carries N6-succinyllysine.

This sequence belongs to the isocitrate and isopropylmalate dehydrogenases family. In terms of assembly, heterooligomer of subunits alpha (IDH3A), beta (IDH3B), and gamma (IDH3G) in the apparent ratio of 2:1:1. The heterodimer containing one IDH3A and one IDH3B subunit and the heterodimer containing one IDH3A and one IDH3G subunit assemble into a heterotetramer (which contains two subunits of IDH3A, one of IDH3B and one of IDH3G) and further into the heterooctamer. Mg(2+) serves as cofactor. It depends on Mn(2+) as a cofactor.

The protein localises to the mitochondrion. The enzyme catalyses D-threo-isocitrate + NAD(+) = 2-oxoglutarate + CO2 + NADH. The heterotetramer and the heterodimer composed of IDH3A and IDH3G subunits can be allosterically activated by citrate (CIT) or/and ADP, and the two activators can act independently or synergistically. The heterodimer composed of IDH3A and IDH3B subunits cannot be allosterically regulated and the allosteric regulation of the heterotetramer is through the IDH3G subunit and not the IDH3B subunit. The IDH3G subunit contains the allosteric site which consists of a CIT-binding site and an ADP-binding site, and the binding of CIT and ADP causes conformational changes at the allosteric site which are transmitted to the active site in the catalytic subunit (IDH3A) through a cascade of conformational changes at the heterodimer interface, leading to stabilization of the isocitrate-binding at the active site and thus activation of the enzyme. ATP can activate the heterotetramer and the heterodimer composed of IDH3A and IDH3G subunits at low concentrations but inhibits their activities at high concentrations, whereas ATP exhibits only inhibitory effect on the heterodimer composed of IDH3A and IDH3B subunits. Catalytic subunit of the enzyme which catalyzes the decarboxylation of isocitrate (ICT) into alpha-ketoglutarate. The heterodimer composed of the alpha (IDH3A) and beta (IDH3B) subunits and the heterodimer composed of the alpha (IDH3A) and gamma (IDH3G) subunits, have considerable basal activity but the full activity of the heterotetramer (containing two subunits of IDH3A, one of IDH3B and one of IDH3G) requires the assembly and cooperative function of both heterodimers. This is Isocitrate dehydrogenase [NAD] subunit alpha, mitochondrial (IDH3A) from Macaca fascicularis (Crab-eating macaque).